The chain runs to 111 residues: Mitochondrial import inner membrane translocase subunit TIM14 (111 aa).

Residues 1–3 (MTG) lie on the Mitochondrial intermembrane side of the membrane. The helical transmembrane segment at 4–24 (GLIAAGLGLAAVGFGARYVLR) threads the bilayer. The Mitochondrial matrix portion of the chain corresponds to 25–111 (NQALIKKGME…AKDLMESTKS (87 aa)). The J domain maps to 58–111 (EAAKILGITPSAKPAKIKDAHKKVMIVNHPDRGGSPYLAAKINEAKDLMESTKS).

Belongs to the TIM14 family. Probable component of the PAM complex at least composed of a mitochondrial HSP70 protein, GrpE, tim-44, tim-16 and tim-14.

It is found in the mitochondrion inner membrane. In terms of biological role, probable component of the PAM complex, a complex required for the translocation of transit peptide-containing proteins from the inner membrane into the mitochondrial matrix in an ATP-dependent manner. May act as a co-chaperone that stimulate the ATP-dependent activity. The sequence is that of Mitochondrial import inner membrane translocase subunit TIM14 (dnj-21) from Caenorhabditis briggsae.